A 232-amino-acid polypeptide reads, in one-letter code: Ubiquinone biosynthesis O-methyltransferase (232 aa).

Residues Arg36, Gly55, Asp76, and Leu120 each coordinate S-adenosyl-L-methionine.

The protein belongs to the methyltransferase superfamily. UbiG/COQ3 family.

The catalysed reaction is a 3-demethylubiquinol + S-adenosyl-L-methionine = a ubiquinol + S-adenosyl-L-homocysteine + H(+). The enzyme catalyses a 3-(all-trans-polyprenyl)benzene-1,2-diol + S-adenosyl-L-methionine = a 2-methoxy-6-(all-trans-polyprenyl)phenol + S-adenosyl-L-homocysteine + H(+). The protein operates within cofactor biosynthesis; ubiquinone biosynthesis. Functionally, O-methyltransferase that catalyzes the 2 O-methylation steps in the ubiquinone biosynthetic pathway. In Pseudomonas aeruginosa (strain UCBPP-PA14), this protein is Ubiquinone biosynthesis O-methyltransferase.